The primary structure comprises 169 residues: MLSPKDRADLEERISKIVVSKGFYFIDLEERMEKGAHIISVVVHGEPSVTIGDCEKLTRAILPLLESFPWYGDNDHLEVTSPGLDRVLKREWEYEIFKGRVIDISFDRDGKSQTIRAKLVGRENENVVIEYEGNYFRIPFDQVRKAKLVFDEGGKEHGKKQKRSHRKGT.

It belongs to the RimP family.

It is found in the cytoplasm. Functionally, required for maturation of 30S ribosomal subunits. This Coprothermobacter proteolyticus (strain ATCC 35245 / DSM 5265 / OCM 4 / BT) protein is Ribosome maturation factor RimP.